Here is a 145-residue protein sequence, read N- to C-terminus: D-aminoacyl-tRNA deacylase (145 aa).

The short motif at 137–138 (GP) is the Gly-cisPro motif, important for rejection of L-amino acids element.

It belongs to the DTD family. In terms of assembly, homodimer.

The protein resides in the cytoplasm. The enzyme catalyses glycyl-tRNA(Ala) + H2O = tRNA(Ala) + glycine + H(+). The catalysed reaction is a D-aminoacyl-tRNA + H2O = a tRNA + a D-alpha-amino acid + H(+). In terms of biological role, an aminoacyl-tRNA editing enzyme that deacylates mischarged D-aminoacyl-tRNAs. Also deacylates mischarged glycyl-tRNA(Ala), protecting cells against glycine mischarging by AlaRS. Acts via tRNA-based rather than protein-based catalysis; rejects L-amino acids rather than detecting D-amino acids in the active site. By recycling D-aminoacyl-tRNA to D-amino acids and free tRNA molecules, this enzyme counteracts the toxicity associated with the formation of D-aminoacyl-tRNA entities in vivo and helps enforce protein L-homochirality. This is D-aminoacyl-tRNA deacylase from Francisella tularensis subsp. holarctica (strain LVS).